Reading from the N-terminus, the 150-residue chain is Macrodomain Ter protein (150 aa).

Belongs to the MatP family. As to quaternary structure, homodimer.

It localises to the cytoplasm. Functionally, required for spatial organization of the terminus region of the chromosome (Ter macrodomain) during the cell cycle. Prevents early segregation of duplicated Ter macrodomains during cell division. Binds specifically to matS, which is a 13 bp signature motif repeated within the Ter macrodomain. The chain is Macrodomain Ter protein from Escherichia coli O6:K15:H31 (strain 536 / UPEC).